Here is a 481-residue protein sequence, read N- to C-terminus: Aspartyl/glutamyl-tRNA(Asn/Gln) amidotransferase subunit B (481 aa).

This sequence belongs to the GatB/GatE family. GatB subfamily. As to quaternary structure, heterotrimer of A, B and C subunits.

The enzyme catalyses L-glutamyl-tRNA(Gln) + L-glutamine + ATP + H2O = L-glutaminyl-tRNA(Gln) + L-glutamate + ADP + phosphate + H(+). It catalyses the reaction L-aspartyl-tRNA(Asn) + L-glutamine + ATP + H2O = L-asparaginyl-tRNA(Asn) + L-glutamate + ADP + phosphate + 2 H(+). In terms of biological role, allows the formation of correctly charged Asn-tRNA(Asn) or Gln-tRNA(Gln) through the transamidation of misacylated Asp-tRNA(Asn) or Glu-tRNA(Gln) in organisms which lack either or both of asparaginyl-tRNA or glutaminyl-tRNA synthetases. The reaction takes place in the presence of glutamine and ATP through an activated phospho-Asp-tRNA(Asn) or phospho-Glu-tRNA(Gln). This is Aspartyl/glutamyl-tRNA(Asn/Gln) amidotransferase subunit B from Cellvibrio japonicus (strain Ueda107) (Pseudomonas fluorescens subsp. cellulosa).